A 223-amino-acid polypeptide reads, in one-letter code: UPF0441 protein YgiB (223 aa).

Residues 178-195 (TVPKTAMAPKPATTTTVT) are compositionally biased toward low complexity. Residues 178-223 (TVPKTAMAPKPATTTTVTRGGFGESVAKQSTMQRGATGTSSRSMGG) form a disordered region. A compositionally biased stretch (polar residues) spans 204-223 (AKQSTMQRGATGTSSRSMGG).

It belongs to the UPF0441 family.

The sequence is that of UPF0441 protein YgiB from Escherichia coli O6:K15:H31 (strain 536 / UPEC).